Consider the following 257-residue polypeptide: MDHMSHNMDSMASMTSTMTMAMSASSTASAPMSTGSAHSMGGMDMGGKDSMHSCKISMLWNWYTIDSCFLSSQWHNTSRGMFAGSCIGVICLVICLEFLRRVGREYDAFIVRRARLRNQYLSTTASSQGLTRATDADASAEDSPNSTRGVVRAASKGAGRTLCSAFEDKTPVRPTLIEQLVRALLHMLQFAVAYFVMLLAMYFNGYIIICIFIGAFLGSFIFSWEPLNLQKEYVIPLPLPYLPQMICKELGLTCVLV.

Transmembrane regions (helical) follow at residues 79 to 99 (RGMFAGSCIGVICLVICLEFL) and 202 to 222 (YFNGYIIICIFIGAFLGSFIF).

This sequence belongs to the copper transporter (Ctr) (TC 1.A.56) family. SLC31A subfamily.

Its subcellular location is the cell membrane. It catalyses the reaction Cu(2+)(in) = Cu(2+)(out). High-affinity copper transporter of plasma membrane that mediates copper uptake under low copper conditions. The mechanism driving the transmembrane transport of copper has still to be determined. Acts as a potential virulence factor. The protein is High-affinity copper transporter ctrC of Aspergillus fumigatus (strain ATCC MYA-4609 / CBS 101355 / FGSC A1100 / Af293) (Neosartorya fumigata).